A 913-amino-acid chain; its full sequence is Protein SEY1 homolog (913 aa).

Over 1–825 the chain is Cytoplasmic; sequence MANASKTQII…ETGGQMSLKN (825 aa). In terms of domain architecture, GB1/RHD3-type G spans 33–288; it reads GFNYNVIAIL…IPADGFAQYC (256 aa). 43 to 50 serves as a coordination point for GTP; the sequence is GSQSSGKS. 2 disordered regions span residues 89–108 and 436–455; these read AGGS…GDKP and TEQD…AKKG. Coiled-coil stretches lie at residues 636 to 659 and 703 to 727; these read DDEN…MESL and IEII…VIIN. The helical transmembrane segment at 826–846 threads the bilayer; it reads VPFAFWVILLILGWNEILMFT. At 847 to 849 the chain is on the lumenal side; it reads RLF. The helical transmembrane segment at 850–870 threads the bilayer; the sequence is FRLNIILPMFMAFIIIVGSCL. Residues 871-913 are Cytoplasmic-facing; sequence YTGNAQVLSYLNKIAFIVIKHSYNFYKHLQTVGNQPTKPEKVD.

The protein belongs to the TRAFAC class dynamin-like GTPase superfamily. GB1/RHD3 GTPase family. RHD3 subfamily.

The protein resides in the endoplasmic reticulum membrane. In terms of biological role, probable GTP-binding protein involved in generating and maintaining the structure of the tubular endoplasmic reticulum network. The sequence is that of Protein SEY1 homolog from Plasmodium chabaudi chabaudi.